We begin with the raw amino-acid sequence, 433 residues long: Glutamyl-tRNA reductase (433 aa).

Substrate-binding positions include 49–52 (TCNR), Ser-109, 114–116 (EGQ), and Gln-120. Cys-50 serves as the catalytic Nucleophile. 189 to 194 (GAGKMS) provides a ligand contact to NADP(+).

It belongs to the glutamyl-tRNA reductase family. In terms of assembly, homodimer.

It carries out the reaction (S)-4-amino-5-oxopentanoate + tRNA(Glu) + NADP(+) = L-glutamyl-tRNA(Glu) + NADPH + H(+). The protein operates within porphyrin-containing compound metabolism; protoporphyrin-IX biosynthesis; 5-aminolevulinate from L-glutamyl-tRNA(Glu): step 1/2. Its pathway is porphyrin-containing compound metabolism; chlorophyll biosynthesis. Catalyzes the NADPH-dependent reduction of glutamyl-tRNA(Glu) to glutamate 1-semialdehyde (GSA). This is Glutamyl-tRNA reductase from Acaryochloris marina (strain MBIC 11017).